We begin with the raw amino-acid sequence, 424 residues long: Inhibin beta A chain (424 aa).

A signal peptide spans 1-20 (MPLLWLRGFLLASCWIIVRS). The propeptide occupies 21 to 308 (SPTPGSGGHS…EEHPHRRRRR (288 aa)). Asparagine 165 is a glycosylation site (N-linked (GlcNAc...) asparagine). Disordered stretches follow at residues 178 to 197 (QQRR…DVGF) and 259 to 306 (KKKK…HRRR). Over residues 188–197 (AGEEAEDVGF) the composition is skewed to acidic residues. Residues 263–275 (KEEEAEGRKRDGE) are compositionally biased toward basic and acidic residues. Cystine bridges form between cysteine 312-cysteine 320, cysteine 319-cysteine 389, cysteine 348-cysteine 421, and cysteine 352-cysteine 423.

It belongs to the TGF-beta family. As to quaternary structure, dimeric, linked by one or more disulfide bonds. Inhibin A is a dimer of alpha/INHA and beta-A/INHBA. Activin A is a homodimer of beta-A/INHBA. Activin AB is a dimer of beta-A/INHBA and beta-B/INHBB. Interacts with FST and FSTL3; these interactions prevent activin A interaction to its type II receptor. Activin A interacts with ACVR2A. Activin A interacts with BMPR2. Inhibin A interacts with ACVR1; this interaction creates a non-signaling complex (NSC) that inhibits ACVR1-mediated BMP signaling. Inhibin A interacts with ACVR2A.

It localises to the secreted. Functionally, inhibins/activins are involved in regulating a number of diverse functions such as hypothalamic and pituitary hormone secretion, gonadal hormone secretion, germ cell development and maturation, erythroid differentiation, insulin secretion, nerve cell survival, embryonic axial development or bone growth, depending on their subunit composition. Its function is as follows. Activin A is a homodimer of INHBA that plays a role in several essential biological processes including embryonic development, stem cell maintenance and differentiation, haematopoiesis, cell proliferation and tissue fibrosis. Signals through type I (such as ACVR1B or ACVR1C) and type II receptors (such as ACVR2A, ACVR2B or BMPR2) which, upon ligand binding, phosphorylate SMAD2 and SMAD3 intracellular signaling mediators that form a complex with SMAD4, translocate to the nucleus and modulate gene expression. Can also activate alternative non-canonical intracellular signaling pathways including the p38 MAPK, extracellular signal-regulated kinases 1/2 (ERK1/2) and c-Jun N-terminal kinases (JNKs) to modulate cell migration and differentiation. Alternatively, promotes osteoblastic differentiation via ACVRL1-SMAD1/5/9 pathway. In addition, can engage the type I receptor ACVR1 to form an ACVR1-activin A-type II receptor non-signaling complex (NSC) that renders receptors unavailable for engagement with BMPs, hence resulting in an apparent inhibition of ACVR1-mediated BMP signaling. In terms of biological role, inhibin A is a dimer of alpha/INHA and beta-A/INHBA that functions as a feedback regulator in the hypothalamic-pituitary-gonadal (HPG) axis. Inhibits the secretion of FSH from the anterior pituitary gland by acting on pituitary gonadotrope cells. Antagonizes activin A by binding to the proteoglycan, betaglycan, and forming a stable complex with and, thereby, sequestering type II activin receptors while excluding type I receptor. The chain is Inhibin beta A chain (INHBA) from Sus scrofa (Pig).